Consider the following 349-residue polypeptide: Homeobox-leucine zipper protein HOX7 (349 aa).

Residues 42–186 are disordered; the sequence is RATRRDEQDD…PKQKSDLANR (145 aa). 2 stretches are compositionally biased toward polar residues: residues 89-99 and 121-135; these read SAETGSANSEM and SSPSSMQEASTRQQV. Residues 150–209 constitute a DNA-binding region (homeobox); it reads GARKKLRLSKEQSSFLEDSFKEHSTLTPKQKSDLANRLNLRPRQVEVWFQNRRARTKLKQ. Positions 167–183 are enriched in basic and acidic residues; it reads DSFKEHSTLTPKQKSDL. Residues 208-252 are leucine-zipper; that stretch reads KQTEVDCEHLKRCCERLTRENRRLQREVAELRGALRTTTSSYPPL.

It belongs to the HD-ZIP homeobox family. Class II subfamily. As to quaternary structure, homodimer. May form a heterodimer with HOX1, HOX2 or HOX3. As to expression, expressed in seedlings, roots, leaves, nodes, internodes, flowers and embryo.

The protein resides in the nucleus. Functionally, probable transcription factor that binds to the DNA sequence 5'-CAAT[GC]ATTG-3'. The polypeptide is Homeobox-leucine zipper protein HOX7 (HOX7) (Oryza sativa subsp. indica (Rice)).